A 131-amino-acid polypeptide reads, in one-letter code: Small ribosomal subunit protein uS8 (131 aa).

The protein belongs to the universal ribosomal protein uS8 family. As to quaternary structure, part of the 30S ribosomal subunit. Contacts proteins S5 and S12.

Its function is as follows. One of the primary rRNA binding proteins, it binds directly to 16S rRNA central domain where it helps coordinate assembly of the platform of the 30S subunit. The chain is Small ribosomal subunit protein uS8 from Nitrosomonas eutropha (strain DSM 101675 / C91 / Nm57).